The sequence spans 182 residues: Lipoprotein signal peptidase (182 aa).

Transmembrane regions (helical) follow at residues 12 to 32, 68 to 88, and 91 to 111; these read VAVFACVAAAALIVDQLTKAW, ATWVISLLAVVACVALAVAGV, and VSMKWSVAISFAFAGALGNLI. Active-site residues include Asp127 and Asp140. The chain crosses the membrane as a helical span at residues 135–155; the sequence is VGNVADIYLVVAGVVLVILIL.

It belongs to the peptidase A8 family.

The protein localises to the cell membrane. The catalysed reaction is Release of signal peptides from bacterial membrane prolipoproteins. Hydrolyzes -Xaa-Yaa-Zaa-|-(S,diacylglyceryl)Cys-, in which Xaa is hydrophobic (preferably Leu), and Yaa (Ala or Ser) and Zaa (Gly or Ala) have small, neutral side chains.. The protein operates within protein modification; lipoprotein biosynthesis (signal peptide cleavage). Its function is as follows. This protein specifically catalyzes the removal of signal peptides from prolipoproteins. The chain is Lipoprotein signal peptidase from Bifidobacterium longum (strain DJO10A).